A 154-amino-acid chain; its full sequence is Protein X (154 aa).

Positions 68–117 (PCALRFTSARRMETTVNAPQSLPTTLHKRTLGLSPRSTTWIEEYIKDCVF) are mitochondrial targeting sequence.

Belongs to the orthohepadnavirus protein X family. As to quaternary structure, may form homodimer. May interact with host CEBPA, CFLAR, CREB1, DDB1, E4F1, HBXIP, HSPD1/HSP60, NFKBIA, POLR2E and SMAD4. Interacts with host SMC5-SMC6 complex and induces its degradation. Interacts with host TRPC4AP; leading to prevent ubiquitination of TRPC4AP. Interacts with host PLSCR1; this interaction promotes ubiquitination and degradation of HBx and impairs HBx-mediated cell proliferation. In terms of processing, a fraction may be phosphorylated in insect cells and HepG2 cells, a human hepatoblastoma cell line. Phosphorylated in vitro by host protein kinase C or mitogen-activated protein kinase. N-acetylated in insect cells.

The protein localises to the host cytoplasm. The protein resides in the host nucleus. It localises to the host mitochondrion. In terms of biological role, multifunctional protein that plays a role in silencing host antiviral defenses and promoting viral transcription. Does not seem to be essential for HBV infection. May be directly involved in development of cirrhosis and liver cancer (hepatocellular carcinoma). Most of cytosolic activities involve modulation of cytosolic calcium. The effect on apoptosis is controversial depending on the cell types in which the studies have been conducted. May induce apoptosis by localizing in mitochondria and causing loss of mitochondrial membrane potential. May also modulate apoptosis by binding host CFLAR, a key regulator of the death-inducing signaling complex (DISC). Promotes viral transcription by using the host E3 ubiquitin ligase DDB1 to target the SMC5-SMC6 complex to proteasomal degradation. This host complex would otherwise bind to viral episomal DNA, and prevents its transcription. Moderately stimulates transcription of many different viral and cellular transcription elements. Promoters and enhancers stimulated by HBx contain DNA binding sites for NF-kappa-B, AP-1, AP-2, c-EBP, ATF/CREB, or the calcium-activated factor NF-AT. This Hepatitis B virus genotype H subtype adw4 (isolate Nicaragua/2928Nic/1997) (HBV-H) protein is Protein X.